The chain runs to 1332 residues: Elongator complex protein 1 (1332 aa).

5 positions are modified to phosphoserine: Ser471, Ser804, Ser867, Ser1171, and Ser1174. The mediates dimerization stretch occupies residues Val885–Asp1332. Residues Gln1150–Lys1208 are disordered. Residues Asp1164 to Glu1177 are compositionally biased toward polar residues. The interval Ala1191–Glu1209 is required for binding to tRNA. Over residues Ser1194–Ser1206 the composition is skewed to basic residues.

Belongs to the ELP1/IKA1 family. In terms of assembly, homodimer; dimerization promotes ELP1 stability and elongator complex formation. Component of the elongator complex which consists of ELP1, ELP2, ELP3, ELP4, ELP5 and ELP6. Interacts preferentially with MAP3K14/NIK followed by IKK-alpha and IKK-beta.

Its subcellular location is the cytoplasm. It localises to the nucleus. The protein operates within tRNA modification; 5-methoxycarbonylmethyl-2-thiouridine-tRNA biosynthesis. In terms of biological role, component of the elongator complex which is required for multiple tRNA modifications, including mcm5U (5-methoxycarbonylmethyl uridine), mcm5s2U (5-methoxycarbonylmethyl-2-thiouridine), and ncm5U (5-carbamoylmethyl uridine). The elongator complex catalyzes the formation of carboxymethyluridine in the wobble base at position 34 in tRNAs. Regulates the migration and branching of projection neurons in the developing cerebral cortex, through a process depending on alpha-tubulin acetylation. ELP1 binds to tRNA, mediating interaction of the elongator complex with tRNA. May act as a scaffold protein that assembles active IKK-MAP3K14 complexes (IKKA, IKKB and MAP3K14/NIK). The polypeptide is Elongator complex protein 1 (Homo sapiens (Human)).